Consider the following 205-residue polypeptide: MSKRVQAKHKLDRRMGQNIWGRPKSPVNRREYGPGQHGQRRKGKMSDFGTQLRAKQKLKGYYGNITEKQFRRYYAEAIRLRGDSGENLIGLLERRLDAVVYRSKFVATPFAARQFVNHGHIKVNGRRVNIPSYQVKAGDVIEVKEASRQLEIVVVASQLAERDVPDYIEVDHQKMSARVTRIPGLSEVPYPVQMEPNLVIEFYSR.

Over residues 1-12 the composition is skewed to basic residues; sequence MSKRVQAKHKLD. A disordered region spans residues 1 to 49; it reads MSKRVQAKHKLDRRMGQNIWGRPKSPVNRREYGPGQHGQRRKGKMSDFG. Residues 94-155 enclose the S4 RNA-binding domain; it reads RRLDAVVYRS…ASRQLEIVVV (62 aa).

The protein belongs to the universal ribosomal protein uS4 family. In terms of assembly, part of the 30S ribosomal subunit. Contacts protein S5. The interaction surface between S4 and S5 is involved in control of translational fidelity.

One of the primary rRNA binding proteins, it binds directly to 16S rRNA where it nucleates assembly of the body of the 30S subunit. In terms of biological role, with S5 and S12 plays an important role in translational accuracy. In Methylorubrum populi (strain ATCC BAA-705 / NCIMB 13946 / BJ001) (Methylobacterium populi), this protein is Small ribosomal subunit protein uS4.